Here is a 201-residue protein sequence, read N- to C-terminus: UPF0301 protein RHECIAT_CH0001061 (201 aa).

It belongs to the UPF0301 (AlgH) family.

In Rhizobium etli (strain CIAT 652), this protein is UPF0301 protein RHECIAT_CH0001061.